The chain runs to 453 residues: Phosphoglucosamine mutase (453 aa).

Ser-105 functions as the Phosphoserine intermediate in the catalytic mechanism. Ser-105, Asp-244, Asp-246, and Asp-248 together coordinate Mg(2+). Ser-105 is modified (phosphoserine).

The protein belongs to the phosphohexose mutase family. Mg(2+) is required as a cofactor. Post-translationally, activated by phosphorylation.

The enzyme catalyses alpha-D-glucosamine 1-phosphate = D-glucosamine 6-phosphate. In terms of biological role, catalyzes the conversion of glucosamine-6-phosphate to glucosamine-1-phosphate. This Blochmanniella pennsylvanica (strain BPEN) protein is Phosphoglucosamine mutase.